The sequence spans 147 residues: Hemoglobin subunit beta-1 (147 aa).

Residues 3–147 (KWSKTELTII…VVSALGKQYH (145 aa)) enclose the Globin domain. 2 residues coordinate heme b: histidine 64 and histidine 93.

Belongs to the globin family. In terms of assembly, hb1 is a heterotetramer of two alpha chains and two beta-1 chains. Red blood cells.

In terms of biological role, involved in oxygen transport from gills to the various peripheral tissues. This Cygnodraco mawsoni (Antarctic dragonfish) protein is Hemoglobin subunit beta-1 (hbb1).